A 70-amino-acid chain; its full sequence is uncharacterized protein (70 aa).

The next 2 helical transmembrane spans lie at 19–39 (VIAL…VVGL) and 40–60 (LFKL…VRKF).

The protein resides in the cell membrane. This is an uncharacterized protein from Streptomyces coelicolor (strain ATCC BAA-471 / A3(2) / M145).